Here is a 412-residue protein sequence, read N- to C-terminus: AT-rich interactive domain-containing protein 3C (412 aa).

The span at 1-23 (MEALQKQQAARLAQGVGPLAPAC) shows a compositional bias: low complexity. Residues 1–96 (MEALQKQQAA…SSQPPGLHPH (96 aa)) are disordered. A compositionally biased stretch (acidic residues) spans 50–73 (AEEEEDAEEDEEKREEAGAEEEAA). Residues 78 to 87 (PGAQGPSSPS) are compositionally biased toward low complexity. The ARID domain occupies 113-205 (DPKRKEFLDD…YLYPYECETR (93 aa)). Disordered stretches follow at residues 232-278 (TPLF…AHAC) and 388-412 (PVPA…SILP). Residues 259 to 272 (TQSSPGPAQGSTSG) show a composition bias toward polar residues. An REKLES domain is found at 304 to 389 (LALGPTREKL…GVLFARRQPV (86 aa)).

Interacts (via REKLES DOMAIN) with NPM1; the interaction mediates ARID3C nuclear shuttling.

The protein localises to the nucleus. In terms of biological role, transcription factor involved in monocyte-to-macrophage differentiation. Forms a complex with NPM1 to translocate to the nucleus, acting as a transcription factor that promotes the expression of the genes involved in macrophage differentiation, such as STAT3, STAT1 and JUNB. This Homo sapiens (Human) protein is AT-rich interactive domain-containing protein 3C.